A 152-amino-acid polypeptide reads, in one-letter code: UPF0266 membrane protein KPK_1957 (152 aa).

The next 3 membrane-spanning stretches (helical) occupy residues 6-26, 45-65, and 67-87; these read LVIILFILALLAYAVYDQFIM, VDGLIFVGLTAILIYNNITQH, and TPITTWLLSALALMGLYLFWI.

This sequence belongs to the UPF0266 family.

It localises to the cell inner membrane. The polypeptide is UPF0266 membrane protein KPK_1957 (Klebsiella pneumoniae (strain 342)).